Here is a 104-residue protein sequence, read N- to C-terminus: Protein translation factor SUI1 homolog (104 aa).

The protein belongs to the SUI1 family.

The chain is Protein translation factor SUI1 homolog from Ignicoccus hospitalis (strain KIN4/I / DSM 18386 / JCM 14125).